The sequence spans 329 residues: Mitochondrial nuclease (329 aa).

The active-site Proton acceptor is histidine 138. A Mg(2+)-binding site is contributed by asparagine 170.

It belongs to the DNA/RNA non-specific endonuclease family. In terms of assembly, homodimer. Mn(2+) serves as cofactor. Requires Mg(2+) as cofactor.

It localises to the mitochondrion inner membrane. This enzyme has both RNase and DNase activity. In Saccharomyces cerevisiae (strain ATCC 204508 / S288c) (Baker's yeast), this protein is Mitochondrial nuclease (NUC1).